A 320-amino-acid polypeptide reads, in one-letter code: Calnexin-independence factor 1 (320 aa).

Residues 16–36 are disordered; that stretch reads SAETSVGEKQPKRKRSEVRAE.

The protein localises to the nucleus. Its subcellular location is the nucleolus. Induces a stably inheritable state of calnexin independence called the Cin state when overexpressed. This chain is Calnexin-independence factor 1 (cif1), found in Schizosaccharomyces pombe (strain 972 / ATCC 24843) (Fission yeast).